Reading from the N-terminus, the 214-residue chain is uncharacterized protein (214 aa).

The transit peptide at 1-49 (MATRGAVAAAASTIWKHRRNPSLRSLSRHFNPNFNHRIIPTGFKYQVRA) directs the protein to the chloroplast.

Its subcellular location is the plastid. The protein resides in the chloroplast. This is an uncharacterized protein from Arabidopsis thaliana (Mouse-ear cress).